An 84-amino-acid polypeptide reads, in one-letter code: MERGQRKVRIGTVVSNKMQKTIVVAVEDKFRHPLYGKIVKRTKKYKVHDENNICNVGDVVKIMETRPLSKEKRWRLVEVIKKAE.

Belongs to the universal ribosomal protein uS17 family. Part of the 30S ribosomal subunit.

One of the primary rRNA binding proteins, it binds specifically to the 5'-end of 16S ribosomal RNA. The protein is Small ribosomal subunit protein uS17 of Caldanaerobacter subterraneus subsp. tengcongensis (strain DSM 15242 / JCM 11007 / NBRC 100824 / MB4) (Thermoanaerobacter tengcongensis).